Here is a 505-residue protein sequence, read N- to C-terminus: MEAKTFFLFMLFIFSQSWLSTSKRILNNPSVFSSSLNFSSGNAERLIKSFNLMPKYDVNVIPKGSLDAPRLIERQIDFLATAGSKNASVGPSVQEFGHYAGYYSLPHSKSAKMFYFFFESRNKTTDPVVIWLTGGPGCSSSVAMFYENGPFKISKDLSLYWNDFGWDKVSNIIYVDQPVGTGFSYTSDESDIRNDEDGVSNDLYDFLQAFFKEHPKFVKNDFFITGESYAGHYIPALASRVHSGNKKKEGIPINLKGFAIGNGLTNPEIQYGAYGDYALQMKLISESDHESLKQDYVECQNITKKCSLGGGLVCDSAVEVCTSIFNKIVAKKSGLNYYDIRKKCVGSLCYDFSRMEIFLNKENVRKALGVGDIKFVSCSSTVYDAMIEDWMQNLEVKIPSLVNDGINLLVYAGEYDLICNWLGNSRWVDQMNWSGQKGFGSAKNVSFLVDGKEAGLLKNHGPLTFLKVYNAGHMVPMDQPKASLQMLQNWMQGKLRTTPVLGFSQ.

Positions 1–22 (MEAKTFFLFMLFIFSQSWLSTS) are cleaved as a signal peptide. Residues Asn-37, Asn-86, and Asn-122 are each glycosylated (N-linked (GlcNAc...) asparagine). 3 disulfides stabilise this stretch: Cys-138-Cys-378, Cys-306-Cys-321, and Cys-344-Cys-349. The active site involves Ser-228. Residue Asn-301 is glycosylated (N-linked (GlcNAc...) asparagine). Asp-416 is an active-site residue. N-linked (GlcNAc...) asparagine glycosylation is found at Asn-432 and Asn-444. His-473 is a catalytic residue.

This sequence belongs to the peptidase S10 family. Expressed in roots, flowers and siliques.

Its subcellular location is the secreted. In terms of biological role, probable carboxypeptidase. In Arabidopsis thaliana (Mouse-ear cress), this protein is Serine carboxypeptidase-like 47 (SCPL47).